A 446-amino-acid chain; its full sequence is Glutamine synthetase (446 aa).

The GS beta-grasp domain occupies 15-102 (RDIRFVRLWF…MFCDITMPDG (88 aa)). The region spanning 109–446 (SRHVLRRQLA…PYELKNYLSL (338 aa)) is the GS catalytic domain. Glu132 and Glu134 together coordinate Mg(2+). Glu184 contributes to the ATP binding site. Residues Glu189 and Glu196 each coordinate Mg(2+). Gly241 is a binding site for L-glutamate. A Mg(2+)-binding site is contributed by His245. ATP contacts are provided by residues 247–249 (HMS) and Ser249. 3 residues coordinate L-glutamate: Arg298, Glu304, and Arg316. Positions 316 and 321 each coordinate ATP. Residue Glu336 coordinates Mg(2+). Residue Arg338 participates in L-glutamate binding. Residue Lys363 forms an Isoglutamyl lysine isopeptide (Lys-Gln) (interchain with Q-Cter in protein Pup) linkage.

Belongs to the glutamine synthetase family. As to quaternary structure, oligomer of 12 subunits arranged in the form of two hexagons. In its feedback-inhibited form, interacts with TnrA in order to block its DNA-binding activity. It depends on Mg(2+) as a cofactor.

Its subcellular location is the cytoplasm. The enzyme catalyses L-glutamate + NH4(+) + ATP = L-glutamine + ADP + phosphate + H(+). With respect to regulation, inhibited by glutamine. In terms of biological role, glutamine synthetase (GS) is an unusual multitasking protein that functions as an enzyme, a transcription coregulator, and a chaperone in ammonium assimilation and in the regulation of genes involved in nitrogen metabolism. It catalyzes the ATP-dependent biosynthesis of glutamine from glutamate and ammonia. Feedback-inhibited GlnA also interacts with and regulates the activity of the transcriptional regulator TnrA. During nitrogen limitation, TnrA is in its DNA-binding active state and turns on the transcription of genes required for nitrogen assimilation. Under conditions of nitrogen excess, feedback-inhibited GlnA forms a stable complex with TnrA, which inhibits its DNA-binding activity. In contrast, feedback-inhibited GlnA acts as a chaperone to stabilize the DNA-binding activity of GlnR, which represses the transcription of nitrogen assimilation genes. The polypeptide is Glutamine synthetase (Mycolicibacterium smegmatis (strain ATCC 700084 / mc(2)155) (Mycobacterium smegmatis)).